The sequence spans 744 residues: MTIKVVPLGAGQDVGRSCVIVTIGNKNIMFDCGMHMGMNDARRFPDFSYISKNGQFTKVIDCVIITHFHLDHCGALPFFTEMCGYDGPIYMTLPTKAICPILLEDYRKITVEKKGETNFFTAQMIKDCMKKVIPVNLHQTIKVDEELSIKAYYAGHVLGAAMFYAKVGDESVVYTGDYNMTPDRHLGSAWIDQVKPDVLITETTYATTIRDSKRGRERDFLKRIHECVEKGGKVLIPVFALGRVQELCILIDSYWEQMNLGHIPIYFSAGLAEKANLYYKLFINWTNQKIKQTFVKRNMFDFKHIKPFQSHLVDAPGAMVLFATPGMLHAGASLEVFKKWAPNELNMTIIPGYCVVGTVGNKLLTTGSDQQQQSKPQSQMVEIDKKTTIEVKCKIHNLSFSAHADAKGILQLIKMSNPRNVILVHGEKEKMGFLSQKIIKEMGVNCYYPANGVTIIIDTMKSIPIDISLNLLKRQILDYSYQYNNNNLNNFNNFNNLNNLNNNNNNNNNNSLKLIDIKNNTSTLFINNNNNNKKKQQSVVVVEESEENQDNNLIEEESFISSNNLLKKARLPISTIPIQGLMVSKQDQSSSSSNSNQLKLLGMNEVSKELSIKEIEMQYSLNLNFNNNTSDDNNNNNNNNNNNNNNNNNNNNNNNNNNNNNNNNNNNNNDNISLNFEFLTNELQRLLPIGINIERLEDSFFKPISLKIKSVSIQHISNMNIVVKWLHKDENLATHIISILKSIN.

6 residues coordinate Zn(2+): His67, His69, Asp71, His72, His156, and Asp177. An HXHXDH motif motif is present at residues 67–72 (HFHLDH). Glu202 is an active-site residue. His425 is a binding site for Zn(2+). The segment at 626–669 (NNNTSDDNNNNNNNNNNNNNNNNNNNNNNNNNNNNNNNNNNNNN) is disordered.

This sequence belongs to the metallo-beta-lactamase superfamily. RNA-metabolizing metallo-beta-lactamase-like family. INTS11 subfamily. In terms of assembly, component of the Integrator complex. The core complex associates with protein phosphatase 2A subunits, to form the Integrator-PP2A (INTAC) complex. The cofactor is Zn(2+).

The protein localises to the nucleus. It localises to the cytoplasm. RNA endonuclease component of the integrator complex, a multiprotein complex that terminates RNA polymerase II (Pol II) transcription in the promoter-proximal region of genes. The integrator complex provides a quality checkpoint during transcription elongation by driving premature transcription termination of transcripts that are unfavorably configured for transcriptional elongation: the complex terminates transcription by (1) catalyzing dephosphorylation of the C-terminal domain (CTD) of Pol II subunit polr2a, (2) degrading the exiting nascent RNA transcript via endonuclease activity and (3) promoting the release of Pol II from bound DNA. The integrator complex is also involved in terminating the synthesis of non-coding Pol II transcripts, such as enhancer RNAs (eRNAs), small nuclear RNAs (snRNAs), telomerase RNAs and long non-coding RNAs (lncRNAs). Within the integrator complex, INTS11 constitutes the RNA endonuclease subunit that degrades exiting nascent RNA transcripts. The protein is Integrator complex subunit 11 homolog (ints11) of Dictyostelium discoideum (Social amoeba).